We begin with the raw amino-acid sequence, 252 residues long: Phosphate import ATP-binding protein PstB (252 aa).

Residues 6–247 (ITIEKLNLYY…PKDERTEKYI (242 aa)) enclose the ABC transporter domain. Position 38-45 (38-45 (GPSGCGKS)) interacts with ATP.

This sequence belongs to the ABC transporter superfamily. Phosphate importer (TC 3.A.1.7) family. In terms of assembly, the complex is composed of two ATP-binding proteins (PstB), two transmembrane proteins (PstC and PstA) and a solute-binding protein (PstS).

The protein localises to the cell membrane. The catalysed reaction is phosphate(out) + ATP + H2O = ADP + 2 phosphate(in) + H(+). In terms of biological role, part of the ABC transporter complex PstSACB involved in phosphate import. Responsible for energy coupling to the transport system. This Lactobacillus delbrueckii subsp. bulgaricus (strain ATCC 11842 / DSM 20081 / BCRC 10696 / JCM 1002 / NBRC 13953 / NCIMB 11778 / NCTC 12712 / WDCM 00102 / Lb 14) protein is Phosphate import ATP-binding protein PstB.